We begin with the raw amino-acid sequence, 438 residues long: Trigger factor (438 aa).

The region spanning 160-245 (DDKVTIDFVG…VKKIQQAELP (86 aa)) is the PPIase FKBP-type domain.

The protein belongs to the FKBP-type PPIase family. Tig subfamily.

The protein resides in the cytoplasm. It catalyses the reaction [protein]-peptidylproline (omega=180) = [protein]-peptidylproline (omega=0). Its function is as follows. Involved in protein export. Acts as a chaperone by maintaining the newly synthesized protein in an open conformation. Functions as a peptidyl-prolyl cis-trans isomerase. The protein is Trigger factor of Francisella tularensis subsp. tularensis (strain FSC 198).